Here is a 647-residue protein sequence, read N- to C-terminus: RalBP1-associated Eps domain-containing protein 2 (647 aa).

One can recognise an EH 1 domain in the interval 21–122; it reads EQQCYSELFA…RTESIKCELP (102 aa). The disordered stretch occupies residues 156–233; it reads EKNSFKRMDN…PSSEGPGAKP (78 aa). Over residues 158 to 170 the composition is skewed to basic and acidic residues; sequence NSFKRMDNEDKQE. Positions 221–230 are enriched in low complexity; that stretch reads PEGPSSEGPG. Ser239 is subject to Phosphoserine. In terms of domain architecture, EH 2 spans 268–359; the sequence is QREYYVNQFR…LQPEYLQAAF (92 aa). The region spanning 301–336 is the EF-hand domain; it reads LSIPELSYIWELSDADCDGALTLSEFCAAFHLIVAR. 4 residues coordinate Ca(2+): Asp314, Asp316, Asp318, and Glu325. The tract at residues 402 to 478 is disordered; it reads PTQDVTTADD…PRPQKTHSRA (77 aa). At Thr466 the chain carries Phosphothreonine. The residue at position 480 (Ser480) is a Phosphoserine. Positions 492 to 568 are disordered; it reads PAANSGLLPP…PENQTTESQE (77 aa). Pro residues predominate over residues 499 to 510; the sequence is LPPPPALPPRPC. The interaction with RALBP1 stretch occupies residues 501-647; it reads PPPALPPRPC…LEQLRPVTVL (147 aa). Positions 524–539 are enriched in polar residues; sequence SQLNRAPSQAAESSPT. The segment at 548–647 is interaction with ASAP1; it reads PPSKPIRRKF…LEQLRPVTVL (100 aa). The stretch at 599–640 forms a coiled coil; that stretch reads IQTAIRKNKEANAVLARLNSELQQQLKEVHQERIALENQLEQ.

As to quaternary structure, interacts with EPN1. Interacts with EPS15 AND EPS15L1. Interacts with RALBP1; can form a ternary complex with activated Ral (RALA or RALB). Interacts with ASAP1; the interaction is direct and this complex can bind paxillin. Also forms a ternary complex with RALBP1 and ASAP1. Interacts with GRB2. In terms of processing, tyrosine-phosphorylated upon stimulation of cells with EGF. Phosphorylation on Tyr-residues induces its association with the EGF receptor probably indirectly through an adapter like GRB2.

It is found in the cytoplasm. Functionally, involved in ligand-dependent receptor mediated endocytosis of the EGF and insulin receptors as part of the Ral signaling pathway. By controlling growth factor receptors endocytosis may regulate cell survival. Through ASAP1 may regulate cell adhesion and migration. This chain is RalBP1-associated Eps domain-containing protein 2 (Reps2), found in Mus musculus (Mouse).